Reading from the N-terminus, the 141-residue chain is Molybdopterin synthase catalytic subunit 2 (141 aa).

Residues 37 to 39 (MIR), 103 to 104 (HR), Lys-119, and 126 to 128 (KHQ) each bind substrate.

Belongs to the MoaE family. Heterotetramer of 2 MoaD subunits and 2 MoaE subunits. Also stable as homodimer. The enzyme changes between these two forms during catalysis.

The catalysed reaction is 2 [molybdopterin-synthase sulfur-carrier protein]-C-terminal-Gly-aminoethanethioate + cyclic pyranopterin phosphate + H2O = molybdopterin + 2 [molybdopterin-synthase sulfur-carrier protein]-C-terminal Gly-Gly + 2 H(+). It participates in cofactor biosynthesis; molybdopterin biosynthesis. Functionally, converts molybdopterin precursor Z into molybdopterin. This requires the incorporation of two sulfur atoms into precursor Z to generate a dithiolene group. The sulfur is provided by MoaD. This Mycobacterium tuberculosis (strain CDC 1551 / Oshkosh) protein is Molybdopterin synthase catalytic subunit 2 (moaE2).